Reading from the N-terminus, the 32-residue chain is MSDIN-like toxin proprotein 3 (32 aa).

Positions 1-10 are excised as a propeptide; it reads MSDINATRLP. Positions 11-17 form a cross-link, cyclopeptide (Ser-Pro); the sequence is SFFFPIP. A propeptide spanning residues 18-32 is cleaved from the precursor; the sequence is CISDDIEMVLTRGER.

This sequence belongs to the MSDIN fungal toxin family. Post-translationally, processed by the macrocyclase-peptidase enzyme POPB to yield a toxic cyclic heptapeptide. POPB first removes 10 residues from the N-terminus. Conformational trapping of the remaining peptide forces the enzyme to release this intermediate rather than proceed to macrocyclization. The enzyme rebinds the remaining peptide in a different conformation and catalyzes macrocyclization of the N-terminal 8 residues.

Functionally, probable toxin that belongs to the MSDIN-like toxin family responsible for a large number of food poisoning cases and deaths. The polypeptide is MSDIN-like toxin proprotein 3 (Amanita phalloides (Death cap)).